Here is a 450-residue protein sequence, read N- to C-terminus: Glucose-6-phosphate isomerase (450 aa).

Catalysis depends on Glu291, which acts as the Proton donor. Catalysis depends on residues His312 and Lys426.

It belongs to the GPI family.

The protein resides in the cytoplasm. The enzyme catalyses alpha-D-glucose 6-phosphate = beta-D-fructose 6-phosphate. Its pathway is carbohydrate biosynthesis; gluconeogenesis. It participates in carbohydrate degradation; glycolysis; D-glyceraldehyde 3-phosphate and glycerone phosphate from D-glucose: step 2/4. Catalyzes the reversible isomerization of glucose-6-phosphate to fructose-6-phosphate. In Clostridium perfringens (strain ATCC 13124 / DSM 756 / JCM 1290 / NCIMB 6125 / NCTC 8237 / Type A), this protein is Glucose-6-phosphate isomerase.